The primary structure comprises 1089 residues: MEPAEEPGQISKDNFLEVPNLSDSVCEDEEVKATFKPGFSPQPSRRGSGSSEDMYLDTPTSASRRVSFADSLGFSLVSVKEFDCWELPSVSTDFDLSGDVFHTDEYVLSPLFDLPSSKEKLMEQLQVQKAVLESAEHLPGSSMKGIIRVLNISFEKLVYVRMSLDDWQTHYDILAEYVPNSCDGETDQFSFKISLVPPYQKEGGKVEFCIRYETSAGTFWSNNNGTNYILVCQKKRKEPEPVKPLEEAPSRQIKGCLKVKSRSKEEPLLAPEENKFETLKFTESYIPTIICSHEDKDDLGANHPNVDDINKKHDEHNGKELDLMINQRLITSQDEKNTFATDTVNFTNKAEGSEKKQAYHEINTDLFMGPLSPSLSAESSLKRDFYHSRSSSPGNEYGHPHSEEIISDMGEKGPSLGDTSSDELMQLELCSKEDLDDNANPANGSGRVCSSFDQRMACGLKNNEAGIKKTGIQDYKYSHGDSTKLEESNASSRDDYAKVDNKKEKQTCLGVNENPSKNFQSVFQTQEGHMGYPKISTEGDKANNQDLTSLLSKDITANTWAVTVDPCPSTNAKRSWREVGSGSNLEPGTSDLSSPRNFSPLTDDHLFQADRENSDSSNPENQNMNTRHRKKWNVLETQSETSETESDIAKHTKEQAEYKDMWEKTDNSRNLKATPTEHLFTCRETECYGLSSLADHGITEKAQAVTAYIIKTTLESTPESASARGKAIIAKLPQETAGNDRPIEVKETAFDPHEGRKDDSHYSLCHGDTAGVIHDNDFERESHLDICNLRVDEMKKEKTTSTCFPQKTYDKEKHGIGSVTSIDEPSQVITGNQKATSKLDLHLGVLPTDRAIFQANADLELLQELSRRTDFNAVPSAFNSDTASASRDSSQVYRHCSKKSVPSYGEEKAVTNTTLQSIPTKSEYNWHPESEVLGHAMSKPEDVFKSSEIMKSGSGGERGGGPILQQKEGSLENSQGPMFFTNEPLENLDEASSENEGLMHSGQSQCYLGDKGLVSSASATVSTQELEAQGRESLLSISTNSKIPYFLLFLIFLATVYYYDLMIGLAFYLFSLYWLYWEGGRQRESVKKK.

The tract at residues 32-57 (KATFKPGFSPQPSRRGSGSSEDMYLD) is disordered. Residues 37–51 (PGFSPQPSRRGSGSS) are compositionally biased toward low complexity. Residues S40 and S44 each carry the phosphoserine; by GSK3 modification. Residues S48 and S51 each carry the phosphoserine modification. Phosphothreonine is present on T58. Positions 64 to 67 (RRVS) match the PP1-binding motif motif. S67 carries the phosphoserine; by PKA modification. The region spanning 123–231 (EQLQVQKAVL…NNNGTNYILV (109 aa)) is the CBM21 domain. Disordered stretches follow at residues 385–420 (FYHS…GDTS), 479–501 (HGDS…KVDN), and 566–649 (PCPS…SDIA). Over residues 581 to 600 (SGSNLEPGTSDLSSPRNFSP) the composition is skewed to polar residues. A compositionally biased stretch (basic and acidic residues) spans 602-614 (TDDHLFQADRENS). The span at 615–625 (DSSNPENQNMN) shows a compositional bias: polar residues. S821 is modified (phosphoserine). The disordered stretch occupies residues 949–968 (IMKSGSGGERGGGPILQQKE). The span at 953 to 962 (GSGGERGGGP) shows a compositional bias: gly residues. A helical membrane pass occupies residues 1047 to 1067 (LLFLIFLATVYYYDLMIGLAF).

In terms of assembly, interacts with PPP1CC catalytic subunit of PP1, and associates with glycogen. Phosphorylation at Ser-48 by ISPK stimulates the dephosphorylation of glycogen synthase and phosphorylase kinase. Skeletal muscle and heart.

Its subcellular location is the membrane. Its function is as follows. Seems to act as a glycogen-targeting subunit for PP1. PP1 is essential for cell division, and participates in the regulation of glycogen metabolism, muscle contractility and protein synthesis. Plays an important role in glycogen synthesis but is not essential for insulin activation of glycogen synthase. The protein is Protein phosphatase 1 regulatory subunit 3A (Ppp1r3a) of Mus musculus (Mouse).